A 476-amino-acid chain; its full sequence is Glycogen synthase (476 aa).

Lys15 lines the ADP-alpha-D-glucose pocket.

This sequence belongs to the glycosyltransferase 1 family. Bacterial/plant glycogen synthase subfamily.

It catalyses the reaction [(1-&gt;4)-alpha-D-glucosyl](n) + ADP-alpha-D-glucose = [(1-&gt;4)-alpha-D-glucosyl](n+1) + ADP + H(+). The protein operates within glycan biosynthesis; glycogen biosynthesis. Synthesizes alpha-1,4-glucan chains using ADP-glucose. This chain is Glycogen synthase, found in Actinobacillus succinogenes (strain ATCC 55618 / DSM 22257 / CCUG 43843 / 130Z).